We begin with the raw amino-acid sequence, 191 residues long: dTTP/UTP pyrophosphatase (191 aa).

Catalysis depends on aspartate 75, which acts as the Proton acceptor.

It belongs to the Maf family. YhdE subfamily. Requires a divalent metal cation as cofactor.

Its subcellular location is the cytoplasm. The enzyme catalyses dTTP + H2O = dTMP + diphosphate + H(+). The catalysed reaction is UTP + H2O = UMP + diphosphate + H(+). Nucleoside triphosphate pyrophosphatase that hydrolyzes dTTP and UTP. May have a dual role in cell division arrest and in preventing the incorporation of modified nucleotides into cellular nucleic acids. This chain is dTTP/UTP pyrophosphatase, found in Aliivibrio fischeri (strain ATCC 700601 / ES114) (Vibrio fischeri).